The sequence spans 225 residues: Uridylate kinase (225 aa).

Position 9–10 (9–10 (GS)) interacts with ATP. Gly-43 is a UMP binding site. The ATP site is built by Gly-44 and Arg-48. UMP is bound by residues Asp-65 and 113-119 (TEPAHST). Positions 139, 145, and 148 each coordinate ATP.

The protein belongs to the UMP kinase family. In terms of assembly, homohexamer.

It localises to the cytoplasm. It carries out the reaction UMP + ATP = UDP + ADP. It participates in pyrimidine metabolism; CTP biosynthesis via de novo pathway; UDP from UMP (UMPK route): step 1/1. Inhibited by UTP. Functionally, catalyzes the reversible phosphorylation of UMP to UDP. The polypeptide is Uridylate kinase (Methanobrevibacter smithii (strain ATCC 35061 / DSM 861 / OCM 144 / PS)).